We begin with the raw amino-acid sequence, 320 residues long: Solute carrier family 25 member 33 (320 aa).

3 Solcar repeats span residues Glu9 to Gln118, Asn126 to Cys213, and Ser231 to Leu315. 6 helical membrane passes run Leu12–Leu32, Val49–Val65, Gly121–Val141, Leu190–Leu210, Phe233–Pro253, and Gln298–Glu318.

This sequence belongs to the mitochondrial carrier (TC 2.A.29) family.

It is found in the mitochondrion inner membrane. It catalyses the reaction UTP(in) + UDP(out) = UTP(out) + UDP(in). The enzyme catalyses dUTP(out) + UTP(in) = dUTP(in) + UTP(out). The catalysed reaction is 5-methyl-UTP(out) + UTP(in) = 5-methyl-UTP(in) + UTP(out). It carries out the reaction 5-methyl-UDP(out) + UTP(in) = 5-methyl-UDP(in) + UTP(out). It catalyses the reaction UTP(in) + CTP(out) = UTP(out) + CTP(in). The enzyme catalyses CDP(out) + UTP(in) = CDP(in) + UTP(out). The catalysed reaction is dCTP(out) + UTP(in) = dCTP(in) + UTP(out). It carries out the reaction dCDP(out) + UTP(in) = dCDP(in) + UTP(out). It catalyses the reaction UTP(in) + GTP(out) = UTP(out) + GTP(in). The enzyme catalyses UTP(in) + GDP(out) = UTP(out) + GDP(in). The catalysed reaction is dGTP(out) + UTP(in) = dGTP(in) + UTP(out). It carries out the reaction dGDP(out) + UTP(in) = dGDP(in) + UTP(out). It catalyses the reaction ITP(out) + UTP(in) = ITP(in) + UTP(out). Functionally, mitochondrial transporter that imports/exports pyrimidine nucleotides into and from mitochondria. Selectively transports uridine, thymidine, guanosine, cytosine and inosine (deoxy)nucleoside di- and triphosphates by an antiport mechanism. May import (deoxy)nucleoside triphosphates in exchange for intramitochondrial (deoxy)nucleoside diphosphates, thus providing precursors necessary for de novo synthesis of mitochondrial DNA and RNA while exporting products of their catabolism. Participates in mitochondrial genome maintenance, regulation of mitochondrial membrane potential and mitochondrial respiration. Upon INS or IGF1 stimulation regulates cell growth and proliferation by controlling mitochondrial DNA replication and transcription, the ratio of mitochondria-to nuclear-encoded components of the electron transport chain resulting in control of mitochondrial ROS production. Participates in dendritic cell endocytosis and may associate with mitochondrial oxidative phosphorylation. The sequence is that of Solute carrier family 25 member 33 (Slc25a33) from Mus musculus (Mouse).